The primary structure comprises 142 residues: Small heat shock protein IbpB (142 aa).

The sHSP domain occupies 25-136 (GQEPQGFPPY…QPQRIAIGTT (112 aa)).

Belongs to the small heat shock protein (HSP20) family. Homodimer. Forms homomultimers of about 100-150 subunits at optimal growth temperatures. Conformation changes to oligomers at high temperatures or high ionic concentrations. The decrease in size of the multimers is accompanied by an increase in chaperone activity.

The protein localises to the cytoplasm. Associates with aggregated proteins, together with IbpA, to stabilize and protect them from irreversible denaturation and extensive proteolysis during heat shock and oxidative stress. Aggregated proteins bound to the IbpAB complex are more efficiently refolded and reactivated by the ATP-dependent chaperone systems ClpB and DnaK/DnaJ/GrpE. Its activity is ATP-independent. The protein is Small heat shock protein IbpB of Serratia proteamaculans (strain 568).